A 271-amino-acid polypeptide reads, in one-letter code: MTGNEHPIGVFDSGVGGLSVLREIRAVLPHENLLYVADSGHLPYGNKPAEYIEQRALTVGRFLLSRGAKAIVVACNTATAAAITVMRAEFRVPVIGMEPGLKPAVALSKSLVVGVLATEGTLKSAKFRDLVGRTTEKVEVIAQACPGWVEQVERGDLGSPATRDLVRRYTEPALERGADTLVLGCTHYPFLAGLIADVAGPDVHIVETGSAVARHLRRRLEADGLLTRRMAPGVELFWSSGPAEVAGRSLAVLWPGVHRVRPLPAGFAAGD.

Residues 12–13 (DS) and 44–45 (YG) contribute to the substrate site. The Proton donor/acceptor role is filled by C75. Position 76-77 (76-77 (NT)) interacts with substrate. The Proton donor/acceptor role is filled by C185. 186–187 (TH) provides a ligand contact to substrate.

The protein belongs to the aspartate/glutamate racemases family.

It carries out the reaction L-glutamate = D-glutamate. Its pathway is cell wall biogenesis; peptidoglycan biosynthesis. Functionally, provides the (R)-glutamate required for cell wall biosynthesis. This chain is Glutamate racemase, found in Methylococcus capsulatus (strain ATCC 33009 / NCIMB 11132 / Bath).